The sequence spans 95 residues: Protein NCBP2AS2 homolog (95 aa).

This is Protein NCBP2AS2 homolog from Ixodes scapularis (Black-legged tick).